The primary structure comprises 385 residues: Homoserine O-succinyltransferase (385 aa).

Residues Asn-45 to Asp-355 enclose the AB hydrolase-1 domain. Ser-151 serves as the catalytic Nucleophile. Arg-221 is a binding site for substrate. Active-site residues include Asp-316 and His-349. Residue Asp-350 coordinates substrate.

This sequence belongs to the AB hydrolase superfamily. MetX family. In terms of assembly, homodimer.

The protein localises to the cytoplasm. It catalyses the reaction L-homoserine + succinyl-CoA = O-succinyl-L-homoserine + CoA. The protein operates within amino-acid biosynthesis; L-methionine biosynthesis via de novo pathway; O-succinyl-L-homoserine from L-homoserine: step 1/1. Its function is as follows. Transfers a succinyl group from succinyl-CoA to L-homoserine, forming succinyl-L-homoserine. In Janthinobacterium sp. (strain Marseille) (Minibacterium massiliensis), this protein is Homoserine O-succinyltransferase.